The primary structure comprises 118 residues: Phosphoribosyl-AMP cyclohydrolase (118 aa).

Asp-87 serves as a coordination point for Mg(2+). Cys-88 is a Zn(2+) binding site. The Mg(2+) site is built by Asp-89 and Asp-91. Positions 104 and 111 each coordinate Zn(2+).

The protein belongs to the PRA-CH family. Homodimer. The cofactor is Mg(2+). Requires Zn(2+) as cofactor.

Its subcellular location is the cytoplasm. It carries out the reaction 1-(5-phospho-beta-D-ribosyl)-5'-AMP + H2O = 1-(5-phospho-beta-D-ribosyl)-5-[(5-phospho-beta-D-ribosylamino)methylideneamino]imidazole-4-carboxamide. It participates in amino-acid biosynthesis; L-histidine biosynthesis; L-histidine from 5-phospho-alpha-D-ribose 1-diphosphate: step 3/9. In terms of biological role, catalyzes the hydrolysis of the adenine ring of phosphoribosyl-AMP. The chain is Phosphoribosyl-AMP cyclohydrolase from Corynebacterium glutamicum (strain R).